Here is a 90-residue protein sequence, read N- to C-terminus: U7-theraphotoxin-Hhn1a 6 (90 aa).

A signal peptide spans 1 to 19; the sequence is MKTAIFTVVLALAVFAVLS. Residues 20–50 constitute a propeptide that is removed on maturation; that stretch reads FGWEANEKALSEEFTELIHEKEAASEAEARE. Intrachain disulfides connect C51-C65, C58-C70, and C64-C81.

Belongs to the neurotoxin 10 (Hwtx-1) family. 13 (Hntx-13) subfamily. Expressed by the venom gland.

The protein localises to the secreted. Functionally, ion channel inhibitor. The protein is U7-theraphotoxin-Hhn1a 6 of Cyriopagopus hainanus (Chinese bird spider).